The sequence spans 422 residues: Serine--tRNA ligase (422 aa).

229-231 (TAE) contacts L-serine. 258 to 260 (RRE) is an ATP binding site. Residue E281 coordinates L-serine. An ATP-binding site is contributed by 345-348 (EISS). S379 serves as a coordination point for L-serine.

The protein belongs to the class-II aminoacyl-tRNA synthetase family. Type-1 seryl-tRNA synthetase subfamily. Homodimer. The tRNA molecule binds across the dimer.

It is found in the cytoplasm. It catalyses the reaction tRNA(Ser) + L-serine + ATP = L-seryl-tRNA(Ser) + AMP + diphosphate + H(+). It carries out the reaction tRNA(Sec) + L-serine + ATP = L-seryl-tRNA(Sec) + AMP + diphosphate + H(+). The protein operates within aminoacyl-tRNA biosynthesis; selenocysteinyl-tRNA(Sec) biosynthesis; L-seryl-tRNA(Sec) from L-serine and tRNA(Sec): step 1/1. Catalyzes the attachment of serine to tRNA(Ser). Is also able to aminoacylate tRNA(Sec) with serine, to form the misacylated tRNA L-seryl-tRNA(Sec), which will be further converted into selenocysteinyl-tRNA(Sec). This is Serine--tRNA ligase from Methanosarcina mazei (strain ATCC BAA-159 / DSM 3647 / Goe1 / Go1 / JCM 11833 / OCM 88) (Methanosarcina frisia).